Here is a 261-residue protein sequence, read N- to C-terminus: Indole-3-glycerol phosphate synthase (261 aa).

Belongs to the TrpC family.

The catalysed reaction is 1-(2-carboxyphenylamino)-1-deoxy-D-ribulose 5-phosphate + H(+) = (1S,2R)-1-C-(indol-3-yl)glycerol 3-phosphate + CO2 + H2O. The protein operates within amino-acid biosynthesis; L-tryptophan biosynthesis; L-tryptophan from chorismate: step 4/5. This chain is Indole-3-glycerol phosphate synthase, found in Burkholderia lata (strain ATCC 17760 / DSM 23089 / LMG 22485 / NCIMB 9086 / R18194 / 383).